Reading from the N-terminus, the 173-residue chain is Shikimate kinase 1 (173 aa).

14–19 lines the ATP pocket; the sequence is GAGKST. A Mg(2+)-binding site is contributed by serine 18. 3 residues coordinate substrate: aspartate 36, arginine 60, and glycine 82. Arginine 120 lines the ATP pocket. Position 140 (arginine 140) interacts with substrate.

This sequence belongs to the shikimate kinase family. Monomer. Mg(2+) serves as cofactor.

The protein localises to the cytoplasm. It carries out the reaction shikimate + ATP = 3-phosphoshikimate + ADP + H(+). It functions in the pathway metabolic intermediate biosynthesis; chorismate biosynthesis; chorismate from D-erythrose 4-phosphate and phosphoenolpyruvate: step 5/7. Functionally, catalyzes the specific phosphorylation of the 3-hydroxyl group of shikimic acid using ATP as a cosubstrate. The chain is Shikimate kinase 1 from Hamiltonella defensa subsp. Acyrthosiphon pisum (strain 5AT).